We begin with the raw amino-acid sequence, 174 residues long: NADH-ubiquinone oxidoreductase chain 6 (174 aa).

6 helical membrane-spanning segments follow: residues 1–21, 24–44, 47–67, 86–106, 111–131, and 151–171; these read MTYVLFLLSVSLVMGFVGFSS, SPIYGGLVLIVSGVVGCTIIL, GGGYMGLMVFLIYLGGMMVVF, VEVLVSVLVGLAMEVGLVLWV, GVVVVVNFNSVGSWMIYEGEG, and WLVVVTGWTLFVGVYIVIEIA.

Belongs to the complex I subunit 6 family. As to quaternary structure, core subunit of respiratory chain NADH dehydrogenase (Complex I) which is composed of 45 different subunits.

Its subcellular location is the mitochondrion inner membrane. It carries out the reaction a ubiquinone + NADH + 5 H(+)(in) = a ubiquinol + NAD(+) + 4 H(+)(out). Core subunit of the mitochondrial membrane respiratory chain NADH dehydrogenase (Complex I) which catalyzes electron transfer from NADH through the respiratory chain, using ubiquinone as an electron acceptor. Essential for the catalytic activity and assembly of complex I. This chain is NADH-ubiquinone oxidoreductase chain 6 (MT-ND6), found in Pan paniscus (Pygmy chimpanzee).